Here is a 467-residue protein sequence, read N- to C-terminus: GTPase Obg (467 aa).

One can recognise an Obg domain in the interval 1-158 (MFYDEAKIFV…RWLRLELKLL (158 aa)). The region spanning 159 to 333 (ADVGLVGLPN…LIRATWERLQ (175 aa)) is the OBG-type G domain. GTP contacts are provided by residues 165 to 172 (GLPNAGKS), 190 to 194 (FTTLE), 214 to 217 (DLPG), 285 to 288 (NKMD), and 314 to 316 (SAA). Positions 172 and 192 each coordinate Mg(2+). Residues 352–430 (TLDRSQERWE…VAGRELVWEP (79 aa)) form the OCT domain.

It belongs to the TRAFAC class OBG-HflX-like GTPase superfamily. OBG GTPase family. As to quaternary structure, monomer. It depends on Mg(2+) as a cofactor.

It localises to the cytoplasm. Functionally, an essential GTPase which binds GTP, GDP and possibly (p)ppGpp with moderate affinity, with high nucleotide exchange rates and a fairly low GTP hydrolysis rate. Plays a role in control of the cell cycle, stress response, ribosome biogenesis and in those bacteria that undergo differentiation, in morphogenesis control. This Thermomicrobium roseum (strain ATCC 27502 / DSM 5159 / P-2) protein is GTPase Obg.